Here is a 443-residue protein sequence, read N- to C-terminus: 3-phosphoshikimate 1-carboxyvinyltransferase (443 aa).

Positions 24, 25, and 29 each coordinate 3-phosphoshikimate. Residue K24 participates in phosphoenolpyruvate binding. Phosphoenolpyruvate-binding residues include G95 and R123. The 3-phosphoshikimate site is built by S167, Q169, D323, and K350. Position 169 (Q169) interacts with phosphoenolpyruvate. D323 (proton acceptor) is an active-site residue. 2 residues coordinate phosphoenolpyruvate: R354 and R398.

This sequence belongs to the EPSP synthase family. In terms of assembly, monomer.

It localises to the cytoplasm. The enzyme catalyses 3-phosphoshikimate + phosphoenolpyruvate = 5-O-(1-carboxyvinyl)-3-phosphoshikimate + phosphate. It participates in metabolic intermediate biosynthesis; chorismate biosynthesis; chorismate from D-erythrose 4-phosphate and phosphoenolpyruvate: step 6/7. Catalyzes the transfer of the enolpyruvyl moiety of phosphoenolpyruvate (PEP) to the 5-hydroxyl of shikimate-3-phosphate (S3P) to produce enolpyruvyl shikimate-3-phosphate and inorganic phosphate. The protein is 3-phosphoshikimate 1-carboxyvinyltransferase of Caulobacter vibrioides (strain ATCC 19089 / CIP 103742 / CB 15) (Caulobacter crescentus).